A 313-amino-acid chain; its full sequence is 3'-5' exoribonuclease YhaM (313 aa).

Residues 22 to 90 (SSVKGTASNG…QLKIRQIRQA (69 aa)) constitute a DNA-binding region (OB). The region spanning 163–279 (HVVSMLRLAK…LHQIDLMDAS (117 aa)) is the HD domain.

The protein belongs to the YhaM family.

Its function is as follows. Shows a 3'-5' exoribonuclease activity. The protein is 3'-5' exoribonuclease YhaM of Listeria monocytogenes serovar 1/2a (strain ATCC BAA-679 / EGD-e).